Reading from the N-terminus, the 440-residue chain is RUN domain-containing protein 3A (440 aa).

Positions 52 to 184 constitute an RUN domain; it reads DDSSEEFVNF…IDFSFCLKGE (133 aa). Residues 213–233 are disordered; the sequence is DDRESVGGSSSEDSSPEHPYL. Residues 262-317 are a coiled coil; that stretch reads YLEELVRLRETQLKNLEAENKRLTQRISEQAEQSLQEKHQLEGVILELQEQLTGLL. Positions 374–402 are disordered; that stretch reads LSSESQRLDGKQDGEPWGPIGKDPTPSML.

Belongs to the RUNDC3 family.

In Xenopus tropicalis (Western clawed frog), this protein is RUN domain-containing protein 3A (rundc3a).